The following is a 552-amino-acid chain: Mothers against decapentaplegic homolog 4 (552 aa).

The segment at 1–322 is mediates interaction with ZBTB7A; sequence MDNMSITNTP…PISNHPAPEY (322 aa). The MH1 domain maps to 18-142; sequence SIVHSLMCHR…YERVVSPGID (125 aa). Lys-37 is subject to N6-acetyllysine. The interval 44–69 is required for interaction with TSC22D1; sequence VKKLKEKKDELDSLITAITTNGAHPS. Cys-71 is a Zn(2+) binding site. A Glycyl lysine isopeptide (Lys-Gly) (interchain with G-Cter in SUMO2) cross-link involves residue Lys-113. Cys-115, Cys-127, and His-132 together coordinate Zn(2+). Residues 264 to 297 form a disordered region; it reads STTTWTGSRTAPYPPNLPHHQNGHLQHHPPMPPH. The tract at residues 275–320 is SAD; that stretch reads PYPPNLPHHQNGHLQHHPPMPPHPGHYWPVHNELAFQPPISNHPAP. Positions 323-552 constitute an MH2 domain; the sequence is WCSIAYFEMD…MPIADPQPLD (230 aa). N6-acetyllysine is present on residues Lys-428 and Lys-507. Residue Lys-519 forms a Glycyl lysine isopeptide (Lys-Gly) (interchain with G-Cter in ubiquitin) linkage.

This sequence belongs to the dwarfin/SMAD family. In terms of assembly, monomer; in the absence of TGF-beta activation. Heterotrimer; on TGF-beta activation. Heterotrimer composed of two molecules of a C-terminally phosphorylated R-SMAD molecule, SMAD2 or SMAD3, and one molecule of SMAD4 to form the transcriptional active SMAD2/SMAD3-SMAD4 complex. Found in a ternary complex composed of SMAD4, STK11/LKB1 and STK11IP. Found in a complex with SMAD1 and YY1. Identified in a complex that contains at least ZNF451, SMAD2, SMAD3 and SMAD4. Interacts with ATF2, COPS5, DACH1, MSG1, SKI, STK11/LKB1, STK11IP and TRIM33. Associates with ZNF423 or ZNF521 in response to BMP2 leading to activate transcription of BMP target genes. Interacts with USP9X. Interacts with RBPMS. Interacts with WWTR1 (via coiled-coil domain). Interacts with CITED1 and CITED2. Interacts with PDPK1 (via PH domain). Interacts with VPS39; this interaction affects heterodimer formation with SMAD3, but not with SMAD2, and leads to inhibition of SMAD3-dependent transcription activation. Interactions with VPS39 and SMAD2 may be mutually exclusive. Interacts (via MH2 domain) with ZNF451 (via N-terminal zinc-finger domains). Interacts with ZC3H3. Interacts weakly with ZNF8. Interacts with NUP93 and IPO7; translocates SMAD4 to the nucleus through the NPC upon BMP7 stimulation resulting in activation of SMAD4 signaling. Interacts with CREB3L1, the interaction takes place upon TGFB1 induction and SMAD4 acts as a CREB3L1 coactivator to induce the expression of genes involved in the assembly of collagen extracellular matrix. Interacts with DLX1. Interacts with ZBTB7A; the interaction is direct and stimulated by TGFB1. Interacts with CREBBP; the recruitment of this transcriptional coactivator is negatively regulated by ZBTB7A. Interacts with EP300; the interaction with this transcriptional coactivator is negatively regulated by ZBTB7A. Interacts with HDAC1. Interacts (via MH2 domain) with ZMIZ1 (via SP-RING-type domain); in the TGF-beta signaling pathway increases the activity of the SMAD3/SMAD4 transcriptional complex. Interacts (via N-terminus) with TSC22D1. Phosphorylated by PDPK1. Post-translationally, monoubiquitinated on Lys-519 by E3 ubiquitin-protein ligase TRIM33. Monoubiquitination hampers its ability to form a stable complex with activated SMAD2/3 resulting in inhibition of TGF-beta/BMP signaling cascade. Deubiquitination by USP9X restores its competence to mediate TGF-beta signaling.

It is found in the cytoplasm. Its subcellular location is the nucleus. In terms of biological role, common SMAD (co-SMAD) is the coactivator and mediator of signal transduction by TGF-beta (transforming growth factor). Component of the heterotrimeric SMAD2/SMAD3-SMAD4 complex that forms in the nucleus and is required for the TGF-mediated signaling. Promotes binding of the SMAD2/SMAD4/FAST-1 complex to DNA and provides an activation function required for SMAD1 or SMAD2 to stimulate transcription. Component of the multimeric SMAD3/SMAD4/JUN/FOS complex which forms at the AP1 promoter site; required for synergistic transcriptional activity in response to TGF-beta. Acts synergistically with SMAD1 and YY1 in bone morphogenetic protein (BMP)-mediated cardiac-specific gene expression. Binds to SMAD binding elements (SBEs) (5'-GTCT/AGAC-3') within BMP response element (BMPRE) of cardiac activating regions. May act as a tumor suppressor. Positively regulates PDPK1 kinase activity by stimulating its dissociation from the 14-3-3 protein YWHAQ which acts as a negative regulator. In muscle physiology, plays a central role in the balance between atrophy and hypertrophy. When recruited by MSTN, promotes atrophy response via phosphorylated SMAD2/4. MSTN decrease causes SMAD4 release and subsequent recruitment by the BMP pathway to promote hypertrophy via phosphorylated SMAD1/5/8. The protein is Mothers against decapentaplegic homolog 4 (SMAD4) of Sus scrofa (Pig).